The following is a 241-amino-acid chain: Ribosome-recycling factor, mitochondrial (241 aa).

This sequence belongs to the RRF family.

It localises to the mitochondrion. In terms of biological role, necessary for protein synthesis in mitochondria. Functions as a ribosome recycling factor in mitochondria. The polypeptide is Ribosome-recycling factor, mitochondrial (RRF1) (Kluyveromyces lactis (strain ATCC 8585 / CBS 2359 / DSM 70799 / NBRC 1267 / NRRL Y-1140 / WM37) (Yeast)).